Reading from the N-terminus, the 310-residue chain is Homocysteine S-methyltransferase (310 aa).

The 310-residue stretch at 1–310 folds into the Hcy-binding domain; sequence MSQNNPLRAL…ADIAALKARS (310 aa). Residues Cys-229, Cys-295, and Cys-296 each contribute to the Zn(2+) site.

Monomer. Requires Zn(2+) as cofactor.

The enzyme catalyses S-methyl-L-methionine + L-homocysteine = 2 L-methionine + H(+). Its function is as follows. Catalyzes methyl transfer from S-methylmethionine or S-adenosylmethionine (less efficient) to homocysteine, selenohomocysteine and less efficiently selenocysteine. The protein is Homocysteine S-methyltransferase (mmuM) of Escherichia coli (strain K12).